We begin with the raw amino-acid sequence, 320 residues long: ATPase H(+)-transporting accessory protein 2 (320 aa).

The first 17 residues, 1–17, serve as a signal peptide directing secretion; sequence MLRVFVIFSLFIAAINA. Topologically, residues 18–277 are lumenal; sequence SGEFTVLNRP…YGSDYPVIFN (260 aa). Residues 278-298 traverse the membrane as a helical segment; that stretch reads IILWFMVVFGLSLLAICYAIA. Residues 299–320 are Cytoplasmic-facing; the sequence is AMDPGRDSIIYRMTSTRIKKDN. A Mediates retrograde transport to the ER motif is present at residues 317–320; sequence KKDN.

In terms of assembly, interacts with fz and fz2. Interacts (via N-terminus) with stan. As an accessory component of the multisubunit proton-transporting vacuolar (V)-ATPase protein pump, might interacts with VhaAC45. Proteolytically cleaved by a furin-like convertase in the trans-Golgi network to generate N- and C-terminal fragments. Cleavage is reduced in the fat body.

The protein resides in the cell membrane. Its subcellular location is the endoplasmic reticulum membrane. It is found in the vesicle. The protein localises to the apical cell membrane. It localises to the golgi apparatus membrane. The protein resides in the secreted. Functionally, multifunctional protein which functions as a transmembrane receptor in the planar cell polarity (PCP) and is involved in the assembly of the proton-transporting vacuolar (V)-ATPase protein pump. As transmembrane receptor mediates fz/PCP signaling through interaction with fz and stabilizes asymmetric PCP domains through its interaction with stan. Also mediates Wnt/beta-cat signaling through interaction with fz/fz2. Probably by controlling the assembly of the V-ATPase pump and thus the acidification of the endo-lysosomal system, plays a role in many neuronal processes including synapse morphology and synaptic transmission. Its function is as follows. Stabilizes asymmetric Planar Cell Polarity (PCP) domains through its interaction with stan. This chain is ATPase H(+)-transporting accessory protein 2, found in Drosophila melanogaster (Fruit fly).